The primary structure comprises 191 residues: Protein GrpE (191 aa).

Belongs to the GrpE family. Homodimer.

Its subcellular location is the cytoplasm. Functionally, participates actively in the response to hyperosmotic and heat shock by preventing the aggregation of stress-denatured proteins, in association with DnaK and GrpE. It is the nucleotide exchange factor for DnaK and may function as a thermosensor. Unfolded proteins bind initially to DnaJ; upon interaction with the DnaJ-bound protein, DnaK hydrolyzes its bound ATP, resulting in the formation of a stable complex. GrpE releases ADP from DnaK; ATP binding to DnaK triggers the release of the substrate protein, thus completing the reaction cycle. Several rounds of ATP-dependent interactions between DnaJ, DnaK and GrpE are required for fully efficient folding. The chain is Protein GrpE from Listeria monocytogenes serotype 4a (strain HCC23).